Reading from the N-terminus, the 2039-residue chain is PHD finger protein 3 (2039 aa).

A phosphoserine mark is found at Ser-97 and Ser-125. The span at 144 to 168 (STIAKRSNAAPLSNTKKASGKTVST) shows a compositional bias: polar residues. The interval 144 to 178 (STIAKRSNAAPLSNTKKASGKTVSTAKAGVKQPER) is disordered. Residues Ser-283 and Ser-299 each carry the phosphoserine modification. The segment covering 460-472 (ESHETANLQDDRN) has biased composition (basic and acidic residues). 3 disordered regions span residues 460-492 (ESHE…KHTK), 528-555 (VKRN…IDKE), and 596-685 (LSDK…SLDE). The segment covering 473-483 (SQSSSVSYLES) has biased composition (low complexity). Basic and acidic residues predominate over residues 596–612 (LSDKSHAHPGCLKEPHH). The segment covering 617-640 (GHVSHSSQKQCHKPQQQAPAMKTN) has biased composition (polar residues). Over residues 642–670 (HVKEELEHPGVEHFKEEDKLKLKKPEKNL) the composition is skewed to basic and acidic residues. Residue Lys-644 forms a Glycyl lysine isopeptide (Lys-Gly) (interchain with G-Cter in SUMO2) linkage. Ser-680 is modified (phosphoserine). A PHD-type zinc finger spans residues 717–772 (SKQCGFCKKPHGNRFMVGCGRCDDWFHGDCVGLSLSQAQQMGEEDKEYVCVKCCAE). Residues 860 to 904 (GQPVLPRRSSEEKSEKIPKESTTVTCTGEKASKPGTHEKQEMKKK) are disordered. Basic and acidic residues-rich tracts occupy residues 867–878 (RSSEEKSEKIPK) and 889–900 (KASKPGTHEKQE). A TFIIS central domain is found at 927–1046 (IRQSVRHSLK…MIEKEQREVE (120 aa)). Lys-964 is covalently cross-linked (Glycyl lysine isopeptide (Lys-Gly) (interchain with G-Cter in SUMO2)). Position 1014 is a phosphoserine (Ser-1014). Positions 1078 to 1109 (EPAANKSLEKPEGSEKQKEEVDSMSKDTTSQH) are disordered. A compositionally biased stretch (basic and acidic residues) spans 1084–1102 (SLEKPEGSEKQKEEVDSMS). Phosphoserine is present on residues Ser-1133, Ser-1148, and Ser-1178. 3 disordered regions span residues 1171–1191 (FEEE…RPEM), 1360–1380 (STSH…PPDK), and 1581–1623 (KQEE…VGKG). Positions 1581 to 1598 (KQEETVESKEKTLKRQLQ) are enriched in basic and acidic residues. Residues Ser-1614 and Ser-1642 each carry the phosphoserine modification. Disordered regions lie at residues 1643-1684 (PQFI…LPGL) and 1776-1800 (PSKS…PMRP). Residues 1666–1684 (ESKDGDSCRNGEKHMLPGL) show a composition bias toward basic and acidic residues. Residues 1781–1797 (TFTSRSTSPRTSTNFSP) are compositionally biased toward low complexity. Arg-1867 and Arg-1877 each carry asymmetric dimethylarginine. Residues 1884–2039 (FYQVKDIRRP…DHTDRTKSKR (156 aa)) are disordered. Composition is skewed to basic and acidic residues over residues 1888–1902 (KDIR…DPWG) and 1912–2039 (PFNR…KSKR). Ser-1898 and Ser-1925 each carry phosphoserine. Residue Lys-1931 forms a Glycyl lysine isopeptide (Lys-Gly) (interchain with G-Cter in SUMO2) linkage.

Ubiquitous. Expression is significantly reduced or lost in glioblastomas, glioblastoma cell lines, anaplastic astrocytomas, and astrocytomas.

This is PHD finger protein 3 (PHF3) from Homo sapiens (Human).